Here is a 347-residue protein sequence, read N- to C-terminus: Dihydroorotate dehydrogenase (quinone) (347 aa).

FMN-binding positions include 62–66 (AGLDK) and Ala-86. Lys-66 is a binding site for substrate. 111–115 (NRMGF) contributes to the substrate binding site. Residues Asn-139 and Asn-172 each contribute to the FMN site. Asn-172 serves as a coordination point for substrate. Ser-175 serves as the catalytic Nucleophile. Asn-177 lines the substrate pocket. FMN contacts are provided by Lys-217 and Thr-245. 246–247 (NT) contributes to the substrate binding site. FMN contacts are provided by residues Gly-268, Gly-297, and 318-319 (YT).

Belongs to the dihydroorotate dehydrogenase family. Type 2 subfamily. Monomer. The cofactor is FMN.

It localises to the cell membrane. The catalysed reaction is (S)-dihydroorotate + a quinone = orotate + a quinol. It participates in pyrimidine metabolism; UMP biosynthesis via de novo pathway; orotate from (S)-dihydroorotate (quinone route): step 1/1. Functionally, catalyzes the conversion of dihydroorotate to orotate with quinone as electron acceptor. In Coxiella burnetii (strain CbuK_Q154) (Coxiella burnetii (strain Q154)), this protein is Dihydroorotate dehydrogenase (quinone).